A 356-amino-acid polypeptide reads, in one-letter code: UDP-N-acetylglucosamine--N-acetylmuramyl-(pentapeptide) pyrophosphoryl-undecaprenol N-acetylglucosamine transferase (356 aa).

Residues 12–14, Asn124, Arg163, Ser188, Ile242, and Gln287 each bind UDP-N-acetyl-alpha-D-glucosamine; that span reads TGG.

This sequence belongs to the glycosyltransferase 28 family. MurG subfamily.

The protein resides in the cell inner membrane. The enzyme catalyses di-trans,octa-cis-undecaprenyl diphospho-N-acetyl-alpha-D-muramoyl-L-alanyl-D-glutamyl-meso-2,6-diaminopimeloyl-D-alanyl-D-alanine + UDP-N-acetyl-alpha-D-glucosamine = di-trans,octa-cis-undecaprenyl diphospho-[N-acetyl-alpha-D-glucosaminyl-(1-&gt;4)]-N-acetyl-alpha-D-muramoyl-L-alanyl-D-glutamyl-meso-2,6-diaminopimeloyl-D-alanyl-D-alanine + UDP + H(+). It functions in the pathway cell wall biogenesis; peptidoglycan biosynthesis. Its function is as follows. Cell wall formation. Catalyzes the transfer of a GlcNAc subunit on undecaprenyl-pyrophosphoryl-MurNAc-pentapeptide (lipid intermediate I) to form undecaprenyl-pyrophosphoryl-MurNAc-(pentapeptide)GlcNAc (lipid intermediate II). The sequence is that of UDP-N-acetylglucosamine--N-acetylmuramyl-(pentapeptide) pyrophosphoryl-undecaprenol N-acetylglucosamine transferase from Pseudomonas syringae pv. syringae (strain B728a).